A 699-amino-acid chain; its full sequence is Elongation factor G (699 aa).

The tr-type G domain maps to 8 to 283 (EHIRNIGICA…AVVDFLPSPI (276 aa)). Residues 17–24 (AHIDAGKT), 81–85 (DTPGH), and 135–138 (NKMD) contribute to the GTP site.

The protein belongs to the TRAFAC class translation factor GTPase superfamily. Classic translation factor GTPase family. EF-G/EF-2 subfamily.

Its subcellular location is the cytoplasm. Catalyzes the GTP-dependent ribosomal translocation step during translation elongation. During this step, the ribosome changes from the pre-translocational (PRE) to the post-translocational (POST) state as the newly formed A-site-bound peptidyl-tRNA and P-site-bound deacylated tRNA move to the P and E sites, respectively. Catalyzes the coordinated movement of the two tRNA molecules, the mRNA and conformational changes in the ribosome. In Rickettsia rickettsii (strain Iowa), this protein is Elongation factor G.